Consider the following 456-residue polypeptide: Protein COBRA (456 aa).

Positions 1 to 36 (MESFFSRSTSIVSKLSFLALWIVFLISSSSFTSTEA) are cleaved as a signal peptide. Residues N45, N170, N178, N217, N242, N258, N328, N343, and N362 are each glycosylated (N-linked (GlcNAc...) asparagine). The GPI-anchor amidated asparagine moiety is linked to residue N431. Positions 432–456 (GGSRSQFSFVAAVLLPLLVFFFFSA) are cleaved as a propeptide — removed in mature form.

Belongs to the COBRA family. As to expression, expressed in roots, stems, leaves, flowers and siliques. Up-regulated in the root zone of rapid longitudinal expansion.

The protein resides in the lateral cell membrane. Its function is as follows. Involved in determining the orientation of cell expansion, probably by playing an important role in cellulose deposition. May act by recruiting cellulose synthesizing complexes to discrete positions on the cell surface. The protein is Protein COBRA (COB) of Arabidopsis thaliana (Mouse-ear cress).